Reading from the N-terminus, the 109-residue chain is Peptide chaperone MftB (109 aa).

Belongs to the peptide chaperone MftB family.

Functionally, peptide chaperone involved in the biosynthesis of the enzyme cofactor mycofactocin (MFT). Binds MftA and MftC with high affinity, and is essential for MftC activity on MftA, likely via the formation of a ternary complex. The polypeptide is Peptide chaperone MftB (Mycobacterium tuberculosis (strain ATCC 25618 / H37Rv)).